A 240-amino-acid polypeptide reads, in one-letter code: Uridylate kinase (240 aa).

Residue 12 to 15 participates in ATP binding; the sequence is KLSG. Position 54 (Gly54) interacts with UMP. ATP-binding residues include Gly55 and Arg59. UMP is bound by residues Asp74 and 135-142; that span reads TGNPFFTT. Positions 162, 168, and 171 each coordinate ATP.

The protein belongs to the UMP kinase family. Homohexamer.

The protein resides in the cytoplasm. It carries out the reaction UMP + ATP = UDP + ADP. The protein operates within pyrimidine metabolism; CTP biosynthesis via de novo pathway; UDP from UMP (UMPK route): step 1/1. Inhibited by UTP. Catalyzes the reversible phosphorylation of UMP to UDP. This Xanthomonas oryzae pv. oryzae (strain KACC10331 / KXO85) protein is Uridylate kinase.